A 508-amino-acid polypeptide reads, in one-letter code: Histidine ammonia-lyase (508 aa).

The segment at residues 145 to 147 is a cross-link (5-imidazolinone (Ala-Gly)); the sequence is ASG. Ser146 is subject to 2,3-didehydroalanine (Ser).

It belongs to the PAL/histidase family. Post-translationally, contains an active site 4-methylidene-imidazol-5-one (MIO), which is formed autocatalytically by cyclization and dehydration of residues Ala-Ser-Gly.

Its subcellular location is the cytoplasm. The enzyme catalyses L-histidine = trans-urocanate + NH4(+). The protein operates within amino-acid degradation; L-histidine degradation into L-glutamate; N-formimidoyl-L-glutamate from L-histidine: step 1/3. The polypeptide is Histidine ammonia-lyase (Myxococcus xanthus (strain DK1622)).